Reading from the N-terminus, the 426-residue chain is Docking protein 3 (426 aa).

Residues 4 to 115 form the PH domain; sequence PVKDGIIYVQ…WIEQLCQLAF (112 aa). Positions 145-249 constitute an IRS-type PTB domain; that stretch reads DLTEFPVLVL…ACQQQGQESP (105 aa). Positions 243-282 are disordered; the sequence is QQGQESPQPSAQGLSNQPWGAEAEDPQCSPTLGRAHSGSH. Over residues 247–260 the composition is skewed to polar residues; it reads ESPQPSAQGLSNQP. Position 331 is a phosphotyrosine (Y331). A disordered region spans residues 357 to 426; it reads GCRQAPEGHS…RDGPGARDWS (70 aa). The span at 402–411 shows a compositional bias: basic residues; the sequence is KPQRTLRAKL.

The protein belongs to the DOK family. Type A subfamily. In terms of assembly, homooligomer. Interacts with GRB2 and INPP5D/SHIP. In terms of processing, tyrosine-phosphorylated in the presence of GRB2.

It localises to the cytoplasm. The protein resides in the cell membrane. In terms of biological role, DOK proteins are enzymatically inert adaptor or scaffolding proteins. They provide a docking platform for the assembly of multimolecular signaling complexes. Plays a role as negative regulator of the mobilization of calcium ions and of calcium signaling. This chain is Docking protein 3 (DOK3), found in Gallus gallus (Chicken).